The sequence spans 429 residues: GTPase Obg (429 aa).

One can recognise an Obg domain in the interval 1 to 158; that stretch reads MFVDQVKIYV…RNVQLELKVL (158 aa). Residues 124 to 145 form a disordered region; it reads RGNKRFATPANPAPELSENGEP. The OBG-type G domain maps to 159–329; that stretch reads ADVGLVGFPS…LLLAIADKLE (171 aa). GTP contacts are provided by residues 165-172, 190-194, 212-215, 282-285, and 310-312; these read GFPSVGKS, FTTIV, DLPG, NKMD, and SAV. Mg(2+) contacts are provided by S172 and T192. Residues 351 to 429 form the OCT domain; that stretch reads KYVAEEPDFE…LLDYEFEFMD (79 aa).

This sequence belongs to the TRAFAC class OBG-HflX-like GTPase superfamily. OBG GTPase family. Monomer. Mg(2+) serves as cofactor.

The protein resides in the cytoplasm. Its function is as follows. An essential GTPase which binds GTP, GDP and possibly (p)ppGpp with moderate affinity, with high nucleotide exchange rates and a fairly low GTP hydrolysis rate. Plays a role in control of the cell cycle, stress response, ribosome biogenesis and in those bacteria that undergo differentiation, in morphogenesis control. This Listeria innocua serovar 6a (strain ATCC BAA-680 / CLIP 11262) protein is GTPase Obg.